The primary structure comprises 423 residues: Gamma-glutamyl phosphate reductase (423 aa).

It belongs to the gamma-glutamyl phosphate reductase family.

The protein resides in the cytoplasm. It catalyses the reaction L-glutamate 5-semialdehyde + phosphate + NADP(+) = L-glutamyl 5-phosphate + NADPH + H(+). Its pathway is amino-acid biosynthesis; L-proline biosynthesis; L-glutamate 5-semialdehyde from L-glutamate: step 2/2. Its function is as follows. Catalyzes the NADPH-dependent reduction of L-glutamate 5-phosphate into L-glutamate 5-semialdehyde and phosphate. The product spontaneously undergoes cyclization to form 1-pyrroline-5-carboxylate. The sequence is that of Gamma-glutamyl phosphate reductase from Paraburkholderia phytofirmans (strain DSM 17436 / LMG 22146 / PsJN) (Burkholderia phytofirmans).